Consider the following 227-residue polypeptide: Ribonuclease 3 (227 aa).

One can recognise an RNase III domain in the interval 6-128 (ASDYQQRIGY…VIAAIYLDAD (123 aa)). Glu41 is a Mg(2+) binding site. The active site involves Asp45. Residues Asp114 and Glu117 each coordinate Mg(2+). Glu117 is an active-site residue. Residues 155 to 225 (DPKTRLQEWL…ASHAINQLDS (71 aa)) form the DRBM domain. Over residues 203 to 212 (GEGSSRRLAE) the composition is skewed to basic and acidic residues. The tract at residues 203–227 (GEGSSRRLAEQDAASHAINQLDSNK) is disordered.

This sequence belongs to the ribonuclease III family. Homodimer. Mg(2+) serves as cofactor.

It is found in the cytoplasm. The enzyme catalyses Endonucleolytic cleavage to 5'-phosphomonoester.. In terms of biological role, digests double-stranded RNA. Involved in the processing of primary rRNA transcript to yield the immediate precursors to the large and small rRNAs (23S and 16S). Processes some mRNAs, and tRNAs when they are encoded in the rRNA operon. Processes pre-crRNA and tracrRNA of type II CRISPR loci if present in the organism. The protein is Ribonuclease 3 of Xylella fastidiosa (strain M12).